Here is a 252-residue protein sequence, read N- to C-terminus: 3-dehydroquinate dehydratase (252 aa).

Residues S21, 46–48 (EWR), and R82 contribute to the 3-dehydroquinate site. H143 acts as the Proton donor/acceptor in catalysis. K170 serves as the catalytic Schiff-base intermediate with substrate. Positions 213, 232, and 236 each coordinate 3-dehydroquinate.

This sequence belongs to the type-I 3-dehydroquinase family. Homodimer.

The enzyme catalyses 3-dehydroquinate = 3-dehydroshikimate + H2O. Its pathway is metabolic intermediate biosynthesis; chorismate biosynthesis; chorismate from D-erythrose 4-phosphate and phosphoenolpyruvate: step 3/7. Involved in the third step of the chorismate pathway, which leads to the biosynthesis of aromatic amino acids. Catalyzes the cis-dehydration of 3-dehydroquinate (DHQ) and introduces the first double bond of the aromatic ring to yield 3-dehydroshikimate. This chain is 3-dehydroquinate dehydratase, found in Escherichia coli O7:K1 (strain IAI39 / ExPEC).